Here is a 272-residue protein sequence, read N- to C-terminus: MYENGISFIISLLICGCVKSEEMMKQHFVLVHGSCLGAWCWYKVKPLLEASGHRVTALDLAACGIDTRSITDISTCEQYSEPLIQLMTSLPNDEKVVLVGHSYGGLTLAIAMDKFPDKISVSVFVTSFMPDTKNSPSFVLEKFASTMTPEDWMGSELEPYVVFSAEFTKHRILQLSPIEDLELRLLLKRPGSLFLNDLSRMKNFSEKGYGSVPRAYIVSKDDHTISEEYQRWMIDNYPPNLVIEMEGTDHLPLFCKPQLLSDHLLAIADKFS.

S102 functions as the Acyl-ester intermediate in the catalytic mechanism. Residues D222 and H250 each act as charge relay system in the active site.

Belongs to the AB hydrolase superfamily. Methylesterase family.

Its function is as follows. Methylesterase shown to have carboxylesterase activity in vitro. The chain is Methylesterase 8 from Arabidopsis thaliana (Mouse-ear cress).